Reading from the N-terminus, the 958-residue chain is Glycine dehydrogenase (decarboxylating) (958 aa).

The residue at position 705 (K705) is an N6-(pyridoxal phosphate)lysine.

It belongs to the GcvP family. In terms of assembly, the glycine cleavage system is composed of four proteins: P, T, L and H. The cofactor is pyridoxal 5'-phosphate.

It carries out the reaction N(6)-[(R)-lipoyl]-L-lysyl-[glycine-cleavage complex H protein] + glycine + H(+) = N(6)-[(R)-S(8)-aminomethyldihydrolipoyl]-L-lysyl-[glycine-cleavage complex H protein] + CO2. In terms of biological role, the glycine cleavage system catalyzes the degradation of glycine. The P protein binds the alpha-amino group of glycine through its pyridoxal phosphate cofactor; CO(2) is released and the remaining methylamine moiety is then transferred to the lipoamide cofactor of the H protein. The polypeptide is Glycine dehydrogenase (decarboxylating) (Synechococcus sp. (strain CC9902)).